The sequence spans 345 residues: Quinolinate synthase (345 aa).

H69 and S87 together coordinate iminosuccinate. [4Fe-4S] cluster is bound at residue C132. Iminosuccinate is bound by residues 158–160 (YVN) and S175. [4Fe-4S] cluster is bound at residue C217. Residues 243 to 245 (HPE) and T260 contribute to the iminosuccinate site. C303 is a binding site for [4Fe-4S] cluster.

Belongs to the quinolinate synthase family. Type 2 subfamily. Requires [4Fe-4S] cluster as cofactor.

The protein resides in the cytoplasm. The enzyme catalyses iminosuccinate + dihydroxyacetone phosphate = quinolinate + phosphate + 2 H2O + H(+). Its pathway is cofactor biosynthesis; NAD(+) biosynthesis; quinolinate from iminoaspartate: step 1/1. Functionally, catalyzes the condensation of iminoaspartate with dihydroxyacetone phosphate to form quinolinate. The sequence is that of Quinolinate synthase from Agrobacterium fabrum (strain C58 / ATCC 33970) (Agrobacterium tumefaciens (strain C58)).